Reading from the N-terminus, the 5065-residue chain is MELEKTHLINYFLEICPTVLDCSRKELQSVLIKKEEEKIRKFLLDKNINLIVIGKEGNDNVEREMDDKENDNVDINMNEEYNSMRTSNLDNKYNNFLFVELMINYKCVTKSISIAFMKRNKENFLSLNDKIDNRNKINLSNELLMFVCGQNDCNTPLDLVYLYLSQGFNNIFDAASGYGQNISGPDSSHFNYGTKKDVENMFSINNKYIGYEGENKVSNILMNNVSKKLNELLISMKNAQIDLNIPIINLHVDKRIKKLLEENPNVDDMKPDKLKQLCESQEFINQLQKDVTKWIEDIQKLTRLNGEFKSGGSALSEINFWIGYENALYQLESQLKNPEVILTLHILKNAKRYFATMSFDSDIQLKQSKEYVLNVNILMKDFPIEDLLGATSIQQIIQAVRNIFNHLKKLKNTTKYPLSRSYNFVESLSRDLNNTMKKVLCTQSLMNMDYEEFDVLISGCVEIFRLWNEEMRIFKDMVRELIKKRSFNERAPAKMVFEHIHLQERLDEIKKFRKQHEKFKSVISTVFGSNNKSLGINLYKDINTAYNIFLSLDPLDLSKNGEDNWEKAKLSYESKVNRVESQITFKLRDQLGGSKTSAEMFHAFSKFNPLFFRPKIRGAIQEYQNTLIQIVVDDLRKLQMIYINGYLKSDSQKVSTIRDIPLVAGSIIWAKQIERKLEDSLKRIENVLGRGWEQHSEGKILRQNIDNFKNLLSQNKTFEKWLKNIKSADKFDMYDNIINIKKLGGNNYEILANYDFQFFNIFKEVRYLQSINLRVPYSIKVKADETKLIYPYALTLQKTFRTYMKICISMDNQAKDVPFNQTIKKLVAAIHNTVQNKIKEGIYLHWDSDIIETYVRKLSETINTFEFMVDEAMNKNKIVLDSLEKMKTCEVCFDCNELKSLIEIIQKKADELYLEHYRNVHIWIEELNIHINKILTERLEEIIKTWTCEFVNWPNNGKRFICKENIHEFKIKNQKFYLHPSIDSMRQIWFSKLSDAINIICGITRIKNIYQKKEKTNEKIQIKSKGKNTNNEKDDDYIYYTNDSNNKNNIYKNKCDDNNNNIVINDVILDNTYKYIIYFIDKKIYDNAIKSINDMVDKAQKYESIWLQYKTLWQIEIGDIISSFGEDIETWKIFMNEIKQTENTFDTLDTEKYFGPIVIDYRILQSKVSSKFEIWQKEIVSEFSKKLGEKTLYLKEEIEKALYDLNTQSELKNETEITAMHILSMTPKDIVGIMNTYDMDILSKTCNSIYNFIEKINEINKKEELEWSKKCDLLKQSEVLLEKQRYTFPTNWLYIDNIIGKLETVKQICKYQIKLIKDYLPYIQSMVLDFDRKVQNNIKELFEEWNKNKPSHGNANSTKALQIITTFEERIDIINEQYEISEKIRKLLELENSESEIGFHVSPNILKEEINCVKGIWDELKIIYSNICDMKKMLWSNVDPKDVKHRLNNLLESIKKIPAKYRQYEIFDNVQNEIQQYLKTYSLLLDLKSESLKERHWKLILQKLNIKIYYNKLTLGNLWSLHLCIHENVLSEILNQAQGEMALEQFLRGLKDTWNEYELELVQYQNKCKLIKGWNDIFSTIDDHLNAIQSMKISSYIKIFEEETFTWDDKLNRLRNLLDVWMNVQRKWVYLEGVLKGSSDIKSLLPQEYNRFKIIDSDFINIMKKTSDKPKLLELFQMEGFQKQLDRLSDSLSKIQKALGEYLEKQRNKFPRFYFVGDEDLLEMIGNSKDAKIIQRNVNKMFAGINSFILKENTNDIILGMSSREGEEVLFLEALNISSFNTLKEWLIVLEKSMKSSLEFYLDEAAKEILEMDMIECTKIENNKILLWSEKYPNQIILLCLQILWTTNIENELINFSKNPPDESNTLFHKSEKICLNLLEFLAVNVVKQKDHRTRQKFVQMITELVHQRDVIRILIDKNVNNVNSFIWLQYMRYYWDSKKKENKINLIIKMADATFEYGYEYLGMCEKLVQTELTDACFLTLTQALKMKLGGNPFGPAGTGKTESVKALGAQLGRYVLVFNCDESFDFTAMGRIFVGLCQVGAWGCFDEFNRLEERILSAVSEQILTIQTSLVQRKNEIEILNKKIGLNKNVGIFVTMNPGYAGRSNLPDNLKQLFRSFAMIEPNKQLIVEVTLFSQGFISAEHLSSKIVSLFDLCSEQLSKQPHYDFGLRSLKSVLNSAGNLKRLTLLKDESKYVQNNQIGFNETLDNNNNNDNNNERKTTTNTNESNIISMEQTLLLKSVCDTVYPKLVSSDIILIQSLLKGVFPNVNVGDLEEKGLINEIHRLCKLRHFTPEEKWITKICQIYQIMKLQHGVMLVGDVGTGKSSAWKILLDSLEALDNIKGVSYVIDAKSLDKEEIYGKLDNINLEWTDGVFTGILRKIIYNSSTQSGNTNKRHWIVFDGDVDPEWAENLNSVLDDNKLLTLPNGERLPIPESVRILFEVDTLKHATLATVSRCGMIWFSRDILSPIILFKHKLNMLKYGDNDYPRKMDKFKLLLINNNERITEKNQNGNENGNENEKKNINIINNNNSNNSNNIYSMNHMNNYNVNANEHNLQQFDNIDSENIMDNIRMNSRIFFEENEQETSSSYIIRTIPYRAVNIISDYFEENEFVHQCLVEAENYEHVMDYEYIRVIESTCLLLQKGFDNLVKKNEKINNTLSDDDIEKYISKWLVVSILWGIGGSLNLETREKFSMFVQSICSIPLPNDLLSKGKMPNMDNTNKISNTLLDYQPNIEDGEWINWKELVQIIDVDRTEISDATLVIETMDTIRHETILEGWLHLKKPFILCGPPGSGKTMTLTSVLKKSSEFDIASLNFSSGSLPNLLLQTFDHYCEYVKTTSELVLRPLQPGKWLIIFADEINLPTPDKYDTQRIIMFMRQIYESQGFWKYDVNNNSWNWVKIERITFAGACNPPTDAGRNPLSNRFLRHTSVLYVDFPGYESLKQIYGTFNRAILRKFPQSSHMADNLTQAMVDFYTKFSETFTIDMQPHYIYSPRELTRWKLALYETLESCDELKTKDLVRLCICEGLRIFQDRLIYKKEKKETDKIIDDIFKYSFPDITKEDLLRPILFNSYMKNYYTEIDKKDLKVLILSKLKIFNEEEINVQLVLFDDVLDHITRIDRVLRLPLGHLLLVGASGAGKTILSRFVSWINGLSVFQIRAGRNYTTESFEADLRHIMKRAGIKEEKITFIFDESNVLGPAFLERMNALLASGEVPGLFEGDNYITLINECKSAYRSNIGLDESDIFKKFTKQVQQNLHIVFTMNPANPDFANRQATSPALFNRCVIDWFGDWPYSALLQVASEFIFNLILPDNNFYMDYVGNEDGPIKGKIQYKNNKAYFLSRAIVEIHNSVVHINNVLMKKGNRYNYMTPRDFLDFIKHFLKIIDEKKEEVSSQKNHLNSGLNKLKDTEIQVAELRNSLAIKKKTLAEKDLEAEEKMKLMIEQQTETEDKKKKAEILSKKLDEQFIIIDQRKEVVRKELSEVEPKFREAEEAVKNIPKKNFDELRAMANPPILVRNAVEAVAILIMNEGDKNVTWEDARKIMKGQDFINKVLYLDKKAVKPQTSSQIKKRINNNDWDVERINKASRAAGPLAKWVESVITFLNILETVQPLEKEIEKLQEETKVAEDQYNEQRDIICELEKKLVQYKNDYAQLISQVQNIKQEMEMVENKIKRSINLIDNLKSEKERWSETFINLEEASETFVGDCLIAAAFCAYIGFFEHYERQRLKRTWGEIIKMHYIKYRNDLSFIEFLSRPSERLQWIGNELPSDDLSIENAIIINNYIRYPMIIDPSDQATTFLLNQYSDKKILKTSFSDKNFIKNLESALRFGSTLLVYDVEKIDAILNSVLNQETHKQGGRLLITIGDSEVDFSPSFNLFLTSRDAHFQFTPDLCSRVTFVNFTLTPSSLQNQCLNMILKNERPDIDKKRCDLLKLQGEYKVKIRELEESLLLELSNVKGNILDDDNVISTMEKLKVQGAEASKEVNIAEEVMVEVENVSNQYLFLAQGSARIYFILQHLCNINFLYQYDLNFFFNIMKDMFNNDHLLSIVKKKDHYKERLKVLEDLLFSLTYNRVARGLLQEDRYVFGLQLCYVKSIINPNIDMDQSYLHYLLKDHYSNQEIDEFEHKKIEKNLLPEYNDEQINALNNLIKHKSFSNLKKCILNNKQKWIELLHSAEPEELVCSILNDMNMSEESMDKSDEMLNKNKNLNILNNVEFGKDDDIPEEKRYINNDNTNMDTTTKNNNNMNNNNNMNNNNNYMLQNKNDISSCLKESLIIKAIRPDKLENCFNKIINHILGRDFLWIPELSMNDFEKYVKENANGNIPIVLISSPGFDPSNKVQQLSEKCKIPLFSIAMGSEEGYISAERVIFTAQSNGGWVLLKNIHISTKWLHELEKNIHKATTNKNFRLFLTMEFNPRIPQSLMRISLTFMFEPPVGIKFSILRSFSLFLENRELCEPKIARLRLYFIVSYLHAIILERRRYTPIGWTKKYEFSDSDLMCALSVVDSWLDKASTKIGKNVSEHIDPCNIPWEAIKKILNEAIYGGRLDNMVDQKILDTFIDHLMNSNSFETDFKLNICNSTSLNKDFLVSPDLFRNINDYINWTNNMSNTDLPAWLGFGQQAEGLLTTRTNFSIISKWNILYSKSRSDVYEPLPHSPLTKSLNEEKYISFEQYKIKNIKEKTIKDKDKNKDEDKNKNKENDDNNKKHIGNNKLVISSSERTESETSESSCTVSRSIHVYSNNENILFINKILENLPQNIPCLEKNEEKLRNAVFRCFERENNLFSDLLKLIKTNLNQLKNVLEEKVKYTNKIRALAKDLNSFNVPSNWLLDGNTTNLNLTNWLKELINRLYQIIVITLEFNEKSCIDINEKKKQKNINIENNEDHNLNDFYKRNNDNILSHFKLNNKEKKLSINFIWLGGLFYPRAFITATRQLSAFKFKNSLDDLELSVLIGNNNNMKYDDMIHFTITCLSIEGAEWSNKDNCLILSDELTIDLPPVTLTWEKKEILKQKQKESSSSLHFMNLPIYLDKSRNSFIGFWNFPVSKGISEQIWYQRGVAIFLSKTY.

The tract at residues 1-1957 (MELEKTHLIN…IIKMADATFE (1957 aa)) is stem. The stretch at 1677-1705 (QMEGFQKQLDRLSDSLSKIQKALGEYLEK) forms a coiled coil. The interval 1958 to 2179 (YGYEYLGMCE…LRSLKSVLNS (222 aa)) is AAA 1. 1996–2003 (GPAGTGKT) lines the ATP pocket. The tract at residues 2203–2223 (FNETLDNNNNNDNNNERKTTT) is disordered. Residues 2204–2215 (NETLDNNNNNDN) show a composition bias toward low complexity. AAA stretches follow at residues 2281-2632 (NEIH…YEYI), 2751-3004 (DVDR…WKLA), and 3097-3367 (IFNE…GNRY). Residue 2319–2326 (GDVGTGKS) participates in ATP binding. The disordered stretch occupies residues 2507 to 2529 (EKNQNGNENGNENEKKNINIINN). ATP contacts are provided by residues 2790–2797 (GPPGSGKT) and 3135–3142 (GASGAGKT). A stalk region spans residues 3386-3701 (IDEKKEEVSS…ETFINLEEAS (316 aa)). 2 coiled-coil regions span residues 3388–3466 (EKKE…LDEQ) and 3970–3997 (TMEK…EVEN). AAA stretches follow at residues 3754 to 3983 (LSRP…EASK) and 4289 to 4507 (FNKI…VVDS). A compositionally biased stretch (basic and acidic residues) spans 4686–4705 (KDKNKDEDKNKNKENDDNNK). The disordered stretch occupies residues 4686–4727 (KDKNKDEDKNKNKENDDNNKKHIGNNKLVISSSERTESETSE).

Belongs to the dynein heavy chain family. As to quaternary structure, consists of at least two heavy chains and a number of intermediate and light chains.

The protein localises to the cytoplasm. It localises to the cytoskeleton. Functionally, acts as a motor for the intracellular retrograde motility of vesicles and organelles along microtubules. Dynein has ATPase activity; the force-producing power stroke is thought to occur on release of ADP. In Plasmodium falciparum (isolate 3D7), this protein is Dynein heavy chain-like protein 1.